We begin with the raw amino-acid sequence, 338 residues long: Malate dehydrogenase, mitochondrial (338 aa).

The N-terminal 24 residues, 1–24, are a transit peptide targeting the mitochondrion; the sequence is MLSALARPAGAALRRSFSTSAQNN. NAD(+) contacts are provided by residues 31-37 and aspartate 57; that span reads GASGGIG. An O-linked (GlcNAc) serine glycan is attached at serine 33. Residues lysine 78 and lysine 91 each carry the N6-acetyllysine; alternate modification. An N6-succinyllysine; alternate mark is found at lysine 78 and lysine 91. Substrate-binding residues include arginine 104 and arginine 110. NAD(+) contacts are provided by residues asparagine 117 and 140 to 142; that span reads ISN. A substrate-binding site is contributed by asparagine 142. Lysine 165 is subject to N6-acetyllysine. Position 176 (arginine 176) interacts with substrate. Lysine 185 carries the post-translational modification N6-acetyllysine; alternate. Lysine 185 carries the post-translational modification N6-succinyllysine; alternate. The Proton acceptor role is filled by histidine 200. Residue lysine 203 is modified to N6-succinyllysine. Residues lysine 215 and lysine 239 each carry the N6-acetyllysine; alternate modification. An N6-succinyllysine; alternate mark is found at lysine 215 and lysine 239. An N6-malonyllysine; alternate modification is found at lysine 239. The residue at position 246 (serine 246) is a Phosphoserine. Position 251 (methionine 251) interacts with NAD(+). Lysine 269 is subject to N6-succinyllysine. An N6-acetyllysine; alternate mark is found at lysine 296, lysine 301, lysine 307, lysine 314, and lysine 324. An N6-succinyllysine; alternate mark is found at lysine 296, lysine 301, lysine 307, lysine 314, and lysine 324. N6-malonyllysine; alternate is present on lysine 307. Serine 326 is subject to Phosphoserine. 3 positions are modified to N6-acetyllysine; alternate: lysine 328, lysine 329, and lysine 335. The residue at position 328 (lysine 328) is an N6-succinyllysine; alternate. Lysine 329 is subject to N6-malonyllysine; alternate. Lysine 335 bears the N6-succinyllysine; alternate mark.

This sequence belongs to the LDH/MDH superfamily. MDH type 1 family. Homodimer. In terms of processing, acetylation is enhanced after treatment either with trichostin A (TCA) or with nicotinamide (NAM) with the appearance of tri- and tetraacetylations. Glucose also increases acetylation.

The protein resides in the mitochondrion matrix. It catalyses the reaction (S)-malate + NAD(+) = oxaloacetate + NADH + H(+). Its activity is regulated as follows. Enzyme activity is enhanced by acetylation. The sequence is that of Malate dehydrogenase, mitochondrial (MDH2) from Bos taurus (Bovine).